We begin with the raw amino-acid sequence, 100 residues long: NADH-quinone oxidoreductase subunit K (100 aa).

A run of 3 helical transmembrane segments spans residues 4–24 (LQHG…GLVI), 28–48 (LLFM…AFVV), and 60–80 (VMYI…LALL).

This sequence belongs to the complex I subunit 4L family. As to quaternary structure, NDH-1 is composed of 13 different subunits. Subunits NuoA, H, J, K, L, M, N constitute the membrane sector of the complex.

It is found in the cell inner membrane. The catalysed reaction is a quinone + NADH + 5 H(+)(in) = a quinol + NAD(+) + 4 H(+)(out). Functionally, NDH-1 shuttles electrons from NADH, via FMN and iron-sulfur (Fe-S) centers, to quinones in the respiratory chain. The immediate electron acceptor for the enzyme in this species is believed to be ubiquinone. Couples the redox reaction to proton translocation (for every two electrons transferred, four hydrogen ions are translocated across the cytoplasmic membrane), and thus conserves the redox energy in a proton gradient. The polypeptide is NADH-quinone oxidoreductase subunit K (Shigella sonnei (strain Ss046)).